The primary structure comprises 295 residues: RNA polymerase sigma-C factor (295 aa).

A Polymerase core binding motif is present at residues 73–86 (DLIQEANIGLMKAV). Residues 250–269 (LSELGEHFGFSRERARQLEI) constitute a DNA-binding region (H-T-H motif).

The protein belongs to the sigma-70 factor family.

Its function is as follows. Sigma factors are initiation factors that promote the attachment of RNA polymerase to specific initiation sites and are then released. This sigma factor is essential for normal fruiting body formation. The protein is RNA polymerase sigma-C factor (sigC) of Myxococcus xanthus.